A 134-amino-acid polypeptide reads, in one-letter code: MGRDTLADIITSIRNADMDRKGTVRIPSTNITENIIKILLREGFIENVRKHQEGNFFFFALTLRHRRNRKGPCRTSLNLKRISRPGLRIYSNYQQIPRILGGMGIVILSTSRGIMTDREARLERIGGEILCYIW.

This sequence belongs to the universal ribosomal protein uS8 family. In terms of assembly, part of the 30S ribosomal subunit.

It is found in the plastid. It localises to the chloroplast. In terms of biological role, one of the primary rRNA binding proteins, it binds directly to 16S rRNA central domain where it helps coordinate assembly of the platform of the 30S subunit. This is Small ribosomal subunit protein uS8c (rps8) from Populus alba (White poplar).